The sequence spans 238 residues: DNA repair protein RAD59 (238 aa).

This sequence belongs to the RAD52 family. In terms of assembly, interacts with RAD51 and RAD52.

Its subcellular location is the nucleus. Its function is as follows. Involved in the repair of double-strand breaks in DNA during vegetative growth via recombination and single-strand annealing. Anneals complementary single-stranded DNA. In Saccharomyces cerevisiae (strain ATCC 204508 / S288c) (Baker's yeast), this protein is DNA repair protein RAD59 (RAD59).